Reading from the N-terminus, the 107-residue chain is UPF0102 protein CTN_0433 (107 aa).

Belongs to the UPF0102 family.

The polypeptide is UPF0102 protein CTN_0433 (Thermotoga neapolitana (strain ATCC 49049 / DSM 4359 / NBRC 107923 / NS-E)).